The following is an 81-amino-acid chain: Ubiquitin-like protein NEDD8 (81 aa).

An N6-acetyllysine modification is found at Lys48. The interval 70–72 is interaction with UBE1C; that stretch reads VLA. Residue Gly76 forms a Glycyl lysine isopeptide (Gly-Lys) (interchain with K-? in acceptor proteins) linkage. The propeptide occupies 77-81; it reads GGLGQ.

The protein belongs to the ubiquitin family. As to quaternary structure, interacts with AHR; interaction is direct. Interacts with NUB1; interaction is direct. Interacts with ESR1. Cleavage of precursor form by UCHL3 or SENP8 is necessary for function. Expressed in the CA1 region of the hippocampus (at protein level).

The protein localises to the nucleus. Its function is as follows. Ubiquitin-like protein which plays an important role in cell cycle control and embryogenesis via its conjugation to a limited number of cellular proteins, such as cullins or p53/TP53. Attachment of NEDD8 to cullins is critical for the recruitment of E2 to the cullin-RING-based E3 ubiquitin-protein ligase complex, thus facilitating polyubiquitination and proteasomal degradation of cyclins and other regulatory proteins. Attachment of NEDD8 to p53/TP53 inhibits p53/TP53 transcriptional activity. Covalent attachment to its substrates requires prior activation by the E1 complex UBE1C-APPBP1 and linkage to the E2 enzyme UBE2M. The chain is Ubiquitin-like protein NEDD8 (Nedd8) from Rattus norvegicus (Rat).